The primary structure comprises 657 residues: UvrABC system protein B (657 aa).

A Helicase ATP-binding domain is found at 29–416 (KLAEFQTNEQ…LSHNNVVEQL (388 aa)). 42-49 (GATGTGKT) lines the ATP pocket. Residues 95–118 (YFDFYQPEAYLPAKGVYIEKSATV) carry the Beta-hairpin motif. Positions 435 to 597 (QVEDLVSEII…KTPMTVQKPI (163 aa)) constitute a Helicase C-terminal domain. Positions 615–650 (AALIKQLTKEMKQAAANQNYELAIEIRDSIFELEKQ) constitute a UVR domain.

It belongs to the UvrB family. Forms a heterotetramer with UvrA during the search for lesions. Interacts with UvrC in an incision complex.

It localises to the cytoplasm. Functionally, the UvrABC repair system catalyzes the recognition and processing of DNA lesions. A damage recognition complex composed of 2 UvrA and 2 UvrB subunits scans DNA for abnormalities. Upon binding of the UvrA(2)B(2) complex to a putative damaged site, the DNA wraps around one UvrB monomer. DNA wrap is dependent on ATP binding by UvrB and probably causes local melting of the DNA helix, facilitating insertion of UvrB beta-hairpin between the DNA strands. Then UvrB probes one DNA strand for the presence of a lesion. If a lesion is found the UvrA subunits dissociate and the UvrB-DNA preincision complex is formed. This complex is subsequently bound by UvrC and the second UvrB is released. If no lesion is found, the DNA wraps around the other UvrB subunit that will check the other stand for damage. In Mycoplasma pneumoniae (strain ATCC 29342 / M129 / Subtype 1) (Mycoplasmoides pneumoniae), this protein is UvrABC system protein B.